Here is a 367-residue protein sequence, read N- to C-terminus: tRNA 2-selenouridine synthase (367 aa).

Residues 14-137 (FLNDVPLMDV…LRRFLIDSLE (124 aa)) form the Rhodanese domain. Residue Cys-97 is the S-selanylcysteine intermediate of the active site.

It belongs to the SelU family. In terms of assembly, monomer.

It carries out the reaction 5-methylaminomethyl-2-thiouridine(34) in tRNA + selenophosphate + (2E)-geranyl diphosphate + H2O + H(+) = 5-methylaminomethyl-2-selenouridine(34) in tRNA + (2E)-thiogeraniol + phosphate + diphosphate. The enzyme catalyses 5-methylaminomethyl-2-thiouridine(34) in tRNA + (2E)-geranyl diphosphate = 5-methylaminomethyl-S-(2E)-geranyl-thiouridine(34) in tRNA + diphosphate. The catalysed reaction is 5-methylaminomethyl-S-(2E)-geranyl-thiouridine(34) in tRNA + selenophosphate + H(+) = 5-methylaminomethyl-2-(Se-phospho)selenouridine(34) in tRNA + (2E)-thiogeraniol. It catalyses the reaction 5-methylaminomethyl-2-(Se-phospho)selenouridine(34) in tRNA + H2O = 5-methylaminomethyl-2-selenouridine(34) in tRNA + phosphate. Involved in the post-transcriptional modification of the uridine at the wobble position (U34) of tRNA(Lys), tRNA(Glu) and tRNA(Gln). Catalyzes the conversion of 2-thiouridine (S2U-RNA) to 2-selenouridine (Se2U-RNA). Acts in a two-step process involving geranylation of 2-thiouridine (S2U) to S-geranyl-2-thiouridine (geS2U) and subsequent selenation of the latter derivative to 2-selenouridine (Se2U) in the tRNA chain. The protein is tRNA 2-selenouridine synthase of Marinobacter nauticus (strain ATCC 700491 / DSM 11845 / VT8) (Marinobacter aquaeolei).